The primary structure comprises 264 residues: Thiazole synthase (264 aa).

Lysine 106 serves as the catalytic Schiff-base intermediate with DXP. Residues glycine 167, 193–194, and 215–216 contribute to the 1-deoxy-D-xylulose 5-phosphate site; these read AG and NS.

It belongs to the ThiG family. Homotetramer. Forms heterodimers with either ThiH or ThiS.

It is found in the cytoplasm. The catalysed reaction is [ThiS sulfur-carrier protein]-C-terminal-Gly-aminoethanethioate + 2-iminoacetate + 1-deoxy-D-xylulose 5-phosphate = [ThiS sulfur-carrier protein]-C-terminal Gly-Gly + 2-[(2R,5Z)-2-carboxy-4-methylthiazol-5(2H)-ylidene]ethyl phosphate + 2 H2O + H(+). Its pathway is cofactor biosynthesis; thiamine diphosphate biosynthesis. Catalyzes the rearrangement of 1-deoxy-D-xylulose 5-phosphate (DXP) to produce the thiazole phosphate moiety of thiamine. Sulfur is provided by the thiocarboxylate moiety of the carrier protein ThiS. In vitro, sulfur can be provided by H(2)S. The chain is Thiazole synthase from Ectopseudomonas mendocina (strain ymp) (Pseudomonas mendocina).